The chain runs to 1149 residues: Structural maintenance of chromosomes protein 6 homolog smc-6 (1149 aa).

Residue 77 to 84 coordinates ATP; that stretch reads GPNGSGKS. A coiled-coil region spans residues 309 to 460; sequence LQDETKKEYA…EEEKYTIQRD (152 aa). The interval 461–687 is flexible hinge; it reads INQLRRKIEQ…DVDEGALARL (227 aa). Residues 714-920 adopt a coiled-coil conformation; it reads YNERDQTKAA…AVDRATVGCD (207 aa). 2 disordered regions span residues 875 to 900 and 1026 to 1060; these read NDKK…STTE and EVDE…VRDL. Residues 1026–1038 show a composition bias toward acidic residues; sequence EVDEHSYDDDSDD. A compositionally biased stretch (basic residues) spans 1042–1058; sequence PRRKKSKKSGQKKKRVR.

It belongs to the SMC family. SMC6 subfamily. Interacts with smc-5. As to expression, expressed in the germline (at protein level).

Its subcellular location is the nucleus. The protein resides in the chromosome. Core component of the smc-5/smc-6 complex. Involved in DNA double-strand break repair by promoting sister-chromatid homologous recombination during meiosis. Also plays a role in the DNA damage repair of ultraviolet (UV) radiation-induced DNA lesions. Promotes efficient DNA replication. The protein is Structural maintenance of chromosomes protein 6 homolog smc-6 of Caenorhabditis elegans.